Here is a 327-residue protein sequence, read N- to C-terminus: GMP reductase (327 aa).

Cys176 (thioimidate intermediate) is an active-site residue. An NADP(+)-binding site is contributed by 205 to 228 (IIADGGIRTHGDIAKSIRFGASMV).

This sequence belongs to the IMPDH/GMPR family. GuaC type 2 subfamily.

It carries out the reaction IMP + NH4(+) + NADP(+) = GMP + NADPH + 2 H(+). Its function is as follows. Catalyzes the irreversible NADPH-dependent deamination of GMP to IMP. It functions in the conversion of nucleobase, nucleoside and nucleotide derivatives of G to A nucleotides, and in maintaining the intracellular balance of A and G nucleotides. The sequence is that of GMP reductase from Streptococcus agalactiae serotype Ia (strain ATCC 27591 / A909 / CDC SS700).